We begin with the raw amino-acid sequence, 414 residues long: Enolase (414 aa).

Position 162 (glutamine 162) interacts with (2R)-2-phosphoglycerate. Glutamate 204 acts as the Proton donor in catalysis. Aspartate 239, glutamate 280, and aspartate 307 together coordinate Mg(2+). Lysine 332, arginine 361, serine 362, and lysine 383 together coordinate (2R)-2-phosphoglycerate. Residue lysine 332 is the Proton acceptor of the active site.

This sequence belongs to the enolase family. Mg(2+) is required as a cofactor.

The protein localises to the cytoplasm. It is found in the secreted. It localises to the cell surface. It catalyses the reaction (2R)-2-phosphoglycerate = phosphoenolpyruvate + H2O. It participates in carbohydrate degradation; glycolysis; pyruvate from D-glyceraldehyde 3-phosphate: step 4/5. Catalyzes the reversible conversion of 2-phosphoglycerate (2-PG) into phosphoenolpyruvate (PEP). It is essential for the degradation of carbohydrates via glycolysis. This chain is Enolase, found in Campylobacter lari (strain RM2100 / D67 / ATCC BAA-1060).